We begin with the raw amino-acid sequence, 78 residues long: Exodeoxyribonuclease 7 small subunit (78 aa).

It belongs to the XseB family. In terms of assembly, heterooligomer composed of large and small subunits.

The protein resides in the cytoplasm. It catalyses the reaction Exonucleolytic cleavage in either 5'- to 3'- or 3'- to 5'-direction to yield nucleoside 5'-phosphates.. Functionally, bidirectionally degrades single-stranded DNA into large acid-insoluble oligonucleotides, which are then degraded further into small acid-soluble oligonucleotides. The chain is Exodeoxyribonuclease 7 small subunit from Synechococcus sp. (strain JA-2-3B'a(2-13)) (Cyanobacteria bacterium Yellowstone B-Prime).